A 154-amino-acid polypeptide reads, in one-letter code: Transcription antitermination protein NusB (154 aa).

It belongs to the NusB family.

In terms of biological role, involved in transcription antitermination. Required for transcription of ribosomal RNA (rRNA) genes. Binds specifically to the boxA antiterminator sequence of the ribosomal RNA (rrn) operons. This is Transcription antitermination protein NusB from Methylobacillus flagellatus (strain ATCC 51484 / DSM 6875 / VKM B-1610 / KT).